A 694-amino-acid chain; its full sequence is Beta-mannosyltransferase 8 (694 aa).

At 1–11 (MKFPKLRKRTV) the chain is on the cytoplasmic side. Residues 12-29 (YWAVLTVFALFTIHFVFQ) form a helical membrane-spanning segment. At 30–694 (YKEHNSHRVQ…YLYDHASVNS (665 aa)) the chain is on the extracellular side. N-linked (GlcNAc...) asparagine glycans are attached at residues asparagine 101 and asparagine 542.

It belongs to the BMT family.

It localises to the membrane. In terms of biological role, beta-mannosyltransferase involved in cell wall biosynthesis through beta-1,2-mannosylation of cell wall phosphopeptidomannan. Plays a role in the ability to produce hyphae in the presence of three bacterial species. This is Beta-mannosyltransferase 8 (BMT8) from Candida albicans (strain SC5314 / ATCC MYA-2876) (Yeast).